The chain runs to 242 residues: Probable septum site-determining protein MinC (242 aa).

It belongs to the MinC family. In terms of assembly, interacts with MinD and FtsZ.

Cell division inhibitor that blocks the formation of polar Z ring septums. Rapidly oscillates between the poles of the cell to destabilize FtsZ filaments that have formed before they mature into polar Z rings. Prevents FtsZ polymerization. The sequence is that of Probable septum site-determining protein MinC from Thioalkalivibrio sulfidiphilus (strain HL-EbGR7).